A 349-amino-acid chain; its full sequence is UDP-N-acetylenolpyruvoylglucosamine reductase (349 aa).

An FAD-binding PCMH-type domain is found at Phe24–Gln197. Arg173 is a catalytic residue. Ser249 acts as the Proton donor in catalysis. Residue Glu345 is part of the active site.

This sequence belongs to the MurB family. The cofactor is FAD.

The protein localises to the cytoplasm. The enzyme catalyses UDP-N-acetyl-alpha-D-muramate + NADP(+) = UDP-N-acetyl-3-O-(1-carboxyvinyl)-alpha-D-glucosamine + NADPH + H(+). Its pathway is cell wall biogenesis; peptidoglycan biosynthesis. In terms of biological role, cell wall formation. The chain is UDP-N-acetylenolpyruvoylglucosamine reductase from Burkholderia lata (strain ATCC 17760 / DSM 23089 / LMG 22485 / NCIMB 9086 / R18194 / 383).